Here is a 376-residue protein sequence, read N- to C-terminus: Chaperone protein DnaJ (376 aa).

The J domain maps to 4–70 (DYYQILGVSK…QKRAAYDRFG (67 aa)). The CR-type zinc-finger motif lies at 139–217 (GVEKNISFSS…CHGLGRYHKQ (79 aa)). Positions 152, 155, 169, 172, 191, 194, 205, and 208 each coordinate Zn(2+). CXXCXGXG motif repeat units follow at residues 152–159 (CDTCHGSG), 169–176 (CDACGGVG), 191–198 (CHKCQGNG), and 205–212 (CKKCHGLG).

It belongs to the DnaJ family. Homodimer. Zn(2+) is required as a cofactor.

It localises to the cytoplasm. Functionally, participates actively in the response to hyperosmotic and heat shock by preventing the aggregation of stress-denatured proteins and by disaggregating proteins, also in an autonomous, DnaK-independent fashion. Unfolded proteins bind initially to DnaJ; upon interaction with the DnaJ-bound protein, DnaK hydrolyzes its bound ATP, resulting in the formation of a stable complex. GrpE releases ADP from DnaK; ATP binding to DnaK triggers the release of the substrate protein, thus completing the reaction cycle. Several rounds of ATP-dependent interactions between DnaJ, DnaK and GrpE are required for fully efficient folding. Also involved, together with DnaK and GrpE, in the DNA replication of plasmids through activation of initiation proteins. The chain is Chaperone protein DnaJ from Rickettsia bellii (strain RML369-C).